Consider the following 239-residue polypeptide: Probable fimbrial chaperone YehC (239 aa).

The signal sequence occupies residues 1–31; that stretch reads MAAIPWRPFNLRGIKMKGLLSLLIFSMVLPA.

This sequence belongs to the periplasmic pilus chaperone family.

The protein localises to the periplasm. Its function is as follows. Part of the yehABCD fimbrial operon. Could contribute to adhesion to various surfaces in specific environmental niches. The polypeptide is Probable fimbrial chaperone YehC (yehC) (Escherichia coli (strain K12)).